A 638-amino-acid chain; its full sequence is Pentatricopeptide repeat-containing protein At3g49730 (638 aa).

PPR repeat units follow at residues 130–164 (SYEV…NPEL), 166–200 (EPEL…GLEP), 201–231 (DEYV…MREK), 235–269 (NLRY…GLEP), 270–304 (DIVV…GFEP), 305–340 (NVNC…GCEA), 341–375 (DIVT…GVMP), 376–410 (SQVT…GCHP), 411–445 (DLLI…GLSP), 446–480 (GVDT…GIFS), 483–513 (QYGT…ISNK), and 520–554 (NVSA…DLMP). The segment at 604–638 (LIEKAKPKGNKEGKKKGTDHQRYKGRGERSRAKAL) is disordered.

This sequence belongs to the PPR family. P subfamily.

The sequence is that of Pentatricopeptide repeat-containing protein At3g49730 from Arabidopsis thaliana (Mouse-ear cress).